Consider the following 562-residue polypeptide: Arf-GAP domain and FG repeat-containing protein 1 (562 aa).

Residues 11-135 (EKHLKMLRDM…WYVPPEQAKV (125 aa)) enclose the Arf-GAP domain. Residues 29-52 (CFDCDQRGPTYVNMTVGSFVCTSC) form a C4-type zinc finger. A disordered region spans residues 145–193 (GSSASSTSSTPEVKPLKSLLGDSAPTLHLNKGTPSQSPVVGRSQGQQQE). A Phosphoserine modification is found at Ser-167. Polar residues predominate over residues 176 to 191 (GTPSQSPVVGRSQGQQ). Thr-177 carries the phosphothreonine modification. 2 positions are modified to phosphoserine: Ser-181 and Ser-362. A glycan (O-linked (GlcNAc) serine) is linked at Ser-367.

Interacts with EPS15R and EPS15. Interacts with FCHO1. In terms of processing, O-glycosylated. Ubiquitously expressed.

The protein localises to the nucleus. It is found in the cytoplasmic vesicle. Its function is as follows. Required for vesicle docking or fusion during acrosome biogenesis. May play a role in RNA trafficking or localization. In case of infection by HIV-1, acts as a cofactor for viral Rev and promotes movement of Rev-responsive element-containing RNAs from the nuclear periphery to the cytoplasm. This step is essential for HIV-1 replication. This Homo sapiens (Human) protein is Arf-GAP domain and FG repeat-containing protein 1 (AGFG1).